Consider the following 158-residue polypeptide: Transcription elongation factor GreA (158 aa).

Residues 45-73 are a coiled coil; sequence AEYHAAREQQSFIEGRIKQLESELSHAEI.

This sequence belongs to the GreA/GreB family.

In terms of biological role, necessary for efficient RNA polymerase transcription elongation past template-encoded arresting sites. The arresting sites in DNA have the property of trapping a certain fraction of elongating RNA polymerases that pass through, resulting in locked ternary complexes. Cleavage of the nascent transcript by cleavage factors such as GreA or GreB allows the resumption of elongation from the new 3'terminus. GreA releases sequences of 2 to 3 nucleotides. This Xanthomonas axonopodis pv. citri (strain 306) protein is Transcription elongation factor GreA.